The following is a 351-amino-acid chain: uncharacterized protein (351 aa).

This is an uncharacterized protein from Caenorhabditis elegans.